Here is a 124-residue protein sequence, read N- to C-terminus: Small ribosomal subunit protein uS12 (124 aa).

D89 carries the post-translational modification 3-methylthioaspartic acid. Residues 105–124 (QGVKNRKQARSRYGAKKEKS) form a disordered region. Positions 108–118 (KNRKQARSRYG) are enriched in basic residues.

Belongs to the universal ribosomal protein uS12 family. As to quaternary structure, part of the 30S ribosomal subunit. Contacts proteins S8 and S17. May interact with IF1 in the 30S initiation complex.

In terms of biological role, with S4 and S5 plays an important role in translational accuracy. Functionally, interacts with and stabilizes bases of the 16S rRNA that are involved in tRNA selection in the A site and with the mRNA backbone. Located at the interface of the 30S and 50S subunits, it traverses the body of the 30S subunit contacting proteins on the other side and probably holding the rRNA structure together. The combined cluster of proteins S8, S12 and S17 appears to hold together the shoulder and platform of the 30S subunit. The chain is Small ribosomal subunit protein uS12 from Mycobacterium leprae (strain Br4923).